A 171-amino-acid chain; its full sequence is Ribosome maturation factor RimM (171 aa).

One can recognise a PRC barrel domain in the interval Asn94–Gly168.

This sequence belongs to the RimM family. In terms of assembly, binds ribosomal protein uS19.

It localises to the cytoplasm. In terms of biological role, an accessory protein needed during the final step in the assembly of 30S ribosomal subunit, possibly for assembly of the head region. Essential for efficient processing of 16S rRNA. May be needed both before and after RbfA during the maturation of 16S rRNA. It has affinity for free ribosomal 30S subunits but not for 70S ribosomes. In Anaplasma phagocytophilum (strain HZ), this protein is Ribosome maturation factor RimM.